A 153-amino-acid polypeptide reads, in one-letter code: MKIIEGNLTAQGLKVGLVIGRFNSFIVDSLVKGAIDTIVRHGGSEDNIEQVLVPGAFEIPIVAQKMAASGKYDAIVALGAVIRGGTPHFDYVAGECVKGIGQVALNSGVPVSFGVLTVDTIDQAIERAGTKAGNKGEECTLAAIETANVLKQI.

5-amino-6-(D-ribitylamino)uracil is bound by residues Phe-22, 56–58, and 80–82; these read AFE and AVI. Residue 85–86 participates in (2S)-2-hydroxy-3-oxobutyl phosphate binding; sequence GT. The Proton donor role is filled by His-88. Phe-113 provides a ligand contact to 5-amino-6-(D-ribitylamino)uracil. Residue Arg-127 participates in (2S)-2-hydroxy-3-oxobutyl phosphate binding.

Belongs to the DMRL synthase family. Forms an icosahedral capsid composed of 60 subunits, arranged as a dodecamer of pentamers.

The enzyme catalyses (2S)-2-hydroxy-3-oxobutyl phosphate + 5-amino-6-(D-ribitylamino)uracil = 6,7-dimethyl-8-(1-D-ribityl)lumazine + phosphate + 2 H2O + H(+). It participates in cofactor biosynthesis; riboflavin biosynthesis; riboflavin from 2-hydroxy-3-oxobutyl phosphate and 5-amino-6-(D-ribitylamino)uracil: step 1/2. Functionally, catalyzes the formation of 6,7-dimethyl-8-ribityllumazine by condensation of 5-amino-6-(D-ribitylamino)uracil with 3,4-dihydroxy-2-butanone 4-phosphate. This is the penultimate step in the biosynthesis of riboflavin. The protein is 6,7-dimethyl-8-ribityllumazine synthase of Hydrogenovibrio crunogenus (strain DSM 25203 / XCL-2) (Thiomicrospira crunogena).